Consider the following 482-residue polypeptide: Glycogen synthase 2 (482 aa).

Lys-18 serves as a coordination point for ADP-alpha-D-glucose.

It belongs to the glycosyltransferase 1 family. Bacterial/plant glycogen synthase subfamily.

It carries out the reaction [(1-&gt;4)-alpha-D-glucosyl](n) + ADP-alpha-D-glucose = [(1-&gt;4)-alpha-D-glucosyl](n+1) + ADP + H(+). Its pathway is glycan biosynthesis; glycogen biosynthesis. In terms of biological role, synthesizes alpha-1,4-glucan chains using ADP-glucose. In Bradyrhizobium diazoefficiens (strain JCM 10833 / BCRC 13528 / IAM 13628 / NBRC 14792 / USDA 110), this protein is Glycogen synthase 2.